We begin with the raw amino-acid sequence, 262 residues long: tRNA pseudouridine synthase A (262 aa).

Catalysis depends on D51, which acts as the Nucleophile. Y109 contacts substrate.

It belongs to the tRNA pseudouridine synthase TruA family. Homodimer.

It carries out the reaction uridine(38/39/40) in tRNA = pseudouridine(38/39/40) in tRNA. In terms of biological role, formation of pseudouridine at positions 38, 39 and 40 in the anticodon stem and loop of transfer RNAs. The polypeptide is tRNA pseudouridine synthase A (Legionella pneumophila (strain Lens)).